The following is a 322-amino-acid chain: 4-hydroxythreonine-4-phosphate dehydrogenase (322 aa).

Positions 131 and 132 each coordinate substrate. A divalent metal cation is bound by residues H161, H206, and H259. Substrate-binding residues include K267, N276, and R285.

This sequence belongs to the PdxA family. In terms of assembly, homodimer. The cofactor is a divalent metal cation.

Its subcellular location is the cytoplasm. It carries out the reaction 4-(phosphooxy)-L-threonine + NAD(+) = 3-amino-2-oxopropyl phosphate + CO2 + NADH. Its pathway is cofactor biosynthesis; pyridoxine 5'-phosphate biosynthesis; pyridoxine 5'-phosphate from D-erythrose 4-phosphate: step 4/5. Catalyzes the NAD(P)-dependent oxidation of 4-(phosphooxy)-L-threonine (HTP) into 2-amino-3-oxo-4-(phosphooxy)butyric acid which spontaneously decarboxylates to form 3-amino-2-oxopropyl phosphate (AHAP). The protein is 4-hydroxythreonine-4-phosphate dehydrogenase of Sulfurihydrogenibium sp. (strain YO3AOP1).